Reading from the N-terminus, the 192-residue chain is Glycerol-3-phosphate acyltransferase (192 aa).

5 helical membrane-spanning segments follow: residues 4-24, 54-74, 80-100, 112-132, and 154-174; these read MFWLLTTFAYLLGSLSFAILL, LAILTLLGDLCKGLVPILIAS, IAQQGWIGVCAVLGHLFPVYF, AGVLLGLYPPAAALAIVAWLL, and LLAWQEPHALLPMSVLTLLIV.

This sequence belongs to the PlsY family. As to quaternary structure, probably interacts with PlsX.

The protein resides in the cell inner membrane. The catalysed reaction is an acyl phosphate + sn-glycerol 3-phosphate = a 1-acyl-sn-glycero-3-phosphate + phosphate. It functions in the pathway lipid metabolism; phospholipid metabolism. Functionally, catalyzes the transfer of an acyl group from acyl-phosphate (acyl-PO(4)) to glycerol-3-phosphate (G3P) to form lysophosphatidic acid (LPA). This enzyme utilizes acyl-phosphate as fatty acyl donor, but not acyl-CoA or acyl-ACP. In Pseudomonas syringae pv. syringae (strain B728a), this protein is Glycerol-3-phosphate acyltransferase.